Here is a 56-residue protein sequence, read N- to C-terminus: Small ribosomal subunit protein uS14A (56 aa).

Residues C21 and C24 each contribute to the Zn(2+) site. Position 25 is a phosphoserine (S25). Zn(2+) contacts are provided by C39 and C42.

It belongs to the universal ribosomal protein uS14 family. In terms of assembly, component of the small ribosomal subunit (SSU). Mature yeast ribosomes consist of a small (40S) and a large (60S) subunit. The 40S small subunit contains 1 molecule of ribosomal RNA (18S rRNA) and 33 different proteins (encoded by 57 genes). The large 60S subunit contains 3 rRNA molecules (25S, 5.8S and 5S rRNA) and 46 different proteins (encoded by 81 genes). Zn(2+) is required as a cofactor.

It is found in the cytoplasm. In terms of biological role, component of the ribosome, a large ribonucleoprotein complex responsible for the synthesis of proteins in the cell. The small ribosomal subunit (SSU) binds messenger RNAs (mRNAs) and translates the encoded message by selecting cognate aminoacyl-transfer RNA (tRNA) molecules. The large subunit (LSU) contains the ribosomal catalytic site termed the peptidyl transferase center (PTC), which catalyzes the formation of peptide bonds, thereby polymerizing the amino acids delivered by tRNAs into a polypeptide chain. The nascent polypeptides leave the ribosome through a tunnel in the LSU and interact with protein factors that function in enzymatic processing, targeting, and the membrane insertion of nascent chains at the exit of the ribosomal tunnel. The polypeptide is Small ribosomal subunit protein uS14A (Saccharomyces cerevisiae (strain ATCC 204508 / S288c) (Baker's yeast)).